Consider the following 158-residue polypeptide: MGHFTFISLCLMPIFLSLSGAECYTCPIDWLSRNGLCYKLFDDTKTWPDAEIFCRKHKPGCHLTSIHSEAESADLAEYIYDYLKSEKNVWIGLNDPQKERIWEWTDRSSTNYTSWNEGEPNNSWNKEYCVHLLASQGYLKWNDTPCESLFAFICRCQF.

The signal sequence occupies residues 1-23; sequence MGHFTFISLCLMPIFLSLSGAEC. Cystine bridges form between Cys-26-Cys-37, Cys-54-Cys-154, Cys-61-Cys-156, and Cys-129-Cys-146. One can recognise a C-type lectin domain in the interval 33 to 155; it reads RNGLCYKLFD…CESLFAFICR (123 aa). N-linked (GlcNAc...) asparagine glycans are attached at residues Asn-111 and Asn-121. Residues 119-121 carry the Mannose-binding motif; sequence EPN. Ca(2+) is bound by residues Glu-127, Asn-142, and Asp-143.

This sequence belongs to the true venom lectin family. As to quaternary structure, homodimer; non-covalently linked. Expressed by the venom gland.

Its subcellular location is the secreted. In terms of biological role, mannose-binding lectin which recognizes specific carbohydrate structures and agglutinates a variety of animal cells by binding to cell-surface glycoproteins and glycolipids. May be a calcium-dependent lectin. In Micrurus corallinus (Brazilian coral snake), this protein is C-type lectin.